A 267-amino-acid chain; its full sequence is Undecaprenyl-diphosphatase (267 aa).

7 consecutive transmembrane segments (helical) span residues 1-21 (MSLFTLFLLALVQGITEFLPI), 40-60 (GQAIDVAVHVGTLGAVILYFW), 85-105 (LAFLLIIATIPVIIFGLFLEV), 112-132 (LRSIAVIGWTMLIFGLVLYWA), 189-209 (AMLMSIPTIIATGVFAGAEVI), 219-239 (DGAIAAALSFLAALAALTLMF), and 245-265 (VSFTPYVIYRVILGVILLVIA).

This sequence belongs to the UppP family.

Its subcellular location is the cell inner membrane. It catalyses the reaction di-trans,octa-cis-undecaprenyl diphosphate + H2O = di-trans,octa-cis-undecaprenyl phosphate + phosphate + H(+). Functionally, catalyzes the dephosphorylation of undecaprenyl diphosphate (UPP). Confers resistance to bacitracin. The protein is Undecaprenyl-diphosphatase of Jannaschia sp. (strain CCS1).